The following is a 230-amino-acid chain: Protein CbbY (230 aa).

Residue Asp-8 is the Nucleophile of the active site. 2 residues coordinate Mg(2+): Asp-8 and Asp-10. Asp-8 contacts substrate. Catalysis depends on Asp-10, which acts as the Proton donor. Residues Glu-17, 50-54 (GGKER), 75-78 (HRAK), and 115-121 (TTTSLPN) contribute to the substrate site. Asp-176 lines the Mg(2+) pocket.

The protein belongs to the HAD-like hydrolase superfamily. CbbY/CbbZ/Gph/YieH family. Mg(2+) serves as cofactor.

The enzyme catalyses D-xylulose 1,5-bisphosphate + H2O = D-xylulose 5-phosphate + phosphate. Its function is as follows. Highly selective xylulose-1,5-bisphosphate (XuBP) phosphatase. Also shows activity towards ribulose-1,5-bisphosphate (RuBP) and fructose-1,6-bisphosphate (FBP), but not towards fructose-6-phosphate (F6P) or ribulose-5-phosphate (Ru5P). Degrades xylulose-1,5-bisphosphate, a potent inhibitor of rubisco produced by the rubisco itself. This Cereibacter sphaeroides (Rhodobacter sphaeroides) protein is Protein CbbY.